A 43-amino-acid polypeptide reads, in one-letter code: Potassium channel toxin gamma-KTx 4.11 (43 aa).

4 disulfides stabilise this stretch: cysteine 5-cysteine 23, cysteine 11-cysteine 34, cysteine 20-cysteine 39, and cysteine 24-cysteine 41.

This sequence belongs to the ergtoxin family. Gamma-KTx 4 subfamily. In terms of tissue distribution, expressed by the venom gland.

The protein resides in the secreted. In terms of biological role, reversibly blocks Kv11/ERG potassium channels. This is Potassium channel toxin gamma-KTx 4.11 from Centruroides noxius (Mexican scorpion).